Reading from the N-terminus, the 30-residue chain is Dendrotoxin A (30 aa).

C3 and C22 form a disulfide bridge.

The protein belongs to the three-finger toxin family. Short-chain subfamily. Acn-esterase inhibitor sub-subfamily. In terms of processing, contains 4 disulfide bonds. Expressed by the venom gland.

It localises to the secreted. Inhibits acetylcholinesterase. Has been described to inhibit both the slowly and the rapidly inactivating phases of potassium efflux. This is Dendrotoxin A from Dendroaspis angusticeps (Eastern green mamba).